Reading from the N-terminus, the 341-residue chain is N-acetyl-gamma-glutamyl-phosphate reductase (341 aa).

Cysteine 147 is a catalytic residue.

It belongs to the NAGSA dehydrogenase family. Type 1 subfamily.

The protein localises to the cytoplasm. It carries out the reaction N-acetyl-L-glutamate 5-semialdehyde + phosphate + NADP(+) = N-acetyl-L-glutamyl 5-phosphate + NADPH + H(+). Its pathway is amino-acid biosynthesis; L-arginine biosynthesis; N(2)-acetyl-L-ornithine from L-glutamate: step 3/4. Functionally, catalyzes the NADPH-dependent reduction of N-acetyl-5-glutamyl phosphate to yield N-acetyl-L-glutamate 5-semialdehyde. The polypeptide is N-acetyl-gamma-glutamyl-phosphate reductase (Staphylococcus epidermidis (strain ATCC 35984 / DSM 28319 / BCRC 17069 / CCUG 31568 / BM 3577 / RP62A)).